Consider the following 457-residue polypeptide: MRPPSPLPARWLCVLAGALAWALGPAGGQAARLQEECDYVQMIEVQHKQCLEEAQLENETIGCSKMWDNLTCWPATPRGQVVVLACPLIFKLFSSIQGRNVSRSCTDEGWTHLEPGPYPIACGLDDKAASLDEQQTMFYGSVKTGYTIGYGLSLATLLVATAILSLFRKLHCTRNYIHMHLFISFILRAAAVFIKDLALFDSGESDQCSEGSVGCKAAMVFFQYCVMANFFWLLVEGLYLYTLLAVSFFSERKYFWGYILIGWGVPSTFTMVWTIARIHFEDYGCWDTINSSLWWIIKGPILTSILVNFILFICIIRILLQKLRPPDIRKSDSSPYSRLARSTLLLIPLFGVHYIMFAFFPDNFKPEVKMVFELVVGSFQGFVVAILYCFLNGEVQAELRRKWRRWHLQGVLGWNPKYRHPSGGSNGATCSTQVSMLTRVSPGARRSSSFQAEVSLV.

The first 30 residues, 1–30 (MRPPSPLPARWLCVLAGALAWALGPAGGQA), serve as a signal peptide directing secretion. The Extracellular portion of the chain corresponds to 31-141 (ARLQEECDYV…DEQQTMFYGS (111 aa)). Intrachain disulfides connect Cys-37–Cys-208, Cys-50–Cys-72, Cys-63–Cys-105, Cys-86–Cys-122, and Cys-215–Cys-285. Asn-58, Asn-69, and Asn-100 each carry an N-linked (GlcNAc...) asparagine glycan. Residues 142-166 (VKTGYTIGYGLSLATLLVATAILSL) form a helical membrane-spanning segment. The Cytoplasmic segment spans residues 167 to 174 (FRKLHCTR). The chain crosses the membrane as a helical span at residues 175–196 (NYIHMHLFISFILRAAAVFIKD). The Extracellular portion of the chain corresponds to 197 to 216 (LALFDSGESDQCSEGSVGCK). A helical transmembrane segment spans residues 217–241 (AAMVFFQYCVMANFFWLLVEGLYLY). Over 242-254 (TLLAVSFFSERKY) the chain is Cytoplasmic. The chain crosses the membrane as a helical span at residues 255 to 276 (FWGYILIGWGVPSTFTMVWTIA). Over 277 to 291 (RIHFEDYGCWDTINS) the chain is Extracellular. Residue Asn-290 is glycosylated (N-linked (GlcNAc...) asparagine). Residues 292–316 (SLWWIIKGPILTSILVNFILFICII) form a helical membrane-spanning segment. At 317–338 (RILLQKLRPPDIRKSDSSPYSR) the chain is on the cytoplasmic side. The chain crosses the membrane as a helical span at residues 339 to 359 (LARSTLLLIPLFGVHYIMFAF). Residues 360 to 367 (FPDNFKPE) are Extracellular-facing. The chain crosses the membrane as a helical span at residues 368 to 391 (VKMVFELVVGSFQGFVVAILYCFL). Residues 392-457 (NGEVQAELRR…SSFQAEVSLV (66 aa)) lie on the Cytoplasmic side of the membrane.

It belongs to the G-protein coupled receptor 2 family. Interacts with ADCYAP1/PACAP; activated by both PACAP27 and PACAP38 neuropeptides. Interacts with VIP; the interaction results in VIPR1 activation. As to expression, in lung, HT-29 colonic epithelial cells, Raji B-lymphoblasts. Lesser extent in brain, heart, kidney, liver and placenta. Not expressed in CD4+ or CD8+ T-cells. Expressed in the T-cell lines HARRIS, HuT 78, Jurkat and SUP-T1, but not in the T-cell lines Peer, MOLT-4, HSB and YT.

It localises to the cell membrane. G protein-coupled receptor activated by the neuropeptides vasoactive intestinal peptide (VIP) and pituitary adenylate cyclase-activating polypeptide (ADCYAP1/PACAP). Binds VIP and both PACAP27 and PACAP38 bioactive peptides with the following order of ligand affinity VIP = PACAP27 &gt; PACAP38. Ligand binding causes a conformation change that triggers signaling via guanine nucleotide-binding proteins (G proteins) and modulates the activity of downstream effectors. Activates cAMP-dependent pathway. The protein is Vasoactive intestinal polypeptide receptor 1 of Homo sapiens (Human).